Consider the following 422-residue polypeptide: Enolase (422 aa).

S41 contributes to the Mg(2+) binding site. E163 serves as a coordination point for (2R)-2-phosphoglycerate. E204 acts as the Proton donor in catalysis. Residues D241, E284, and D311 each contribute to the Mg(2+) site. Residue K336 is the Proton acceptor of the active site. (2R)-2-phosphoglycerate is bound by residues R365, S366, and K387.

Belongs to the enolase family. Homodimer. Component of the RNA degradosome, a multiprotein complex involved in RNA processing and mRNA degradation. Mg(2+) is required as a cofactor.

It is found in the cytoplasm. Its subcellular location is the secreted. It localises to the cell surface. It catalyses the reaction (2R)-2-phosphoglycerate = phosphoenolpyruvate + H2O. It participates in carbohydrate degradation; glycolysis; pyruvate from D-glyceraldehyde 3-phosphate: step 4/5. In terms of biological role, catalyzes the reversible conversion of 2-phosphoglycerate (2-PG) into phosphoenolpyruvate (PEP). It is essential for the degradation of carbohydrates via glycolysis. The polypeptide is Enolase (Legionella pneumophila subsp. pneumophila (strain Philadelphia 1 / ATCC 33152 / DSM 7513)).